Here is a 441-residue protein sequence, read N- to C-terminus: Squalene synthase (441 aa).

A run of 2 helical transmembrane segments spans residues 293–313 and 420–440; these read SFQFCAIPQVMAIATLALVFG and FKFNVLLSILFTVFGALYWYA.

The protein belongs to the phytoene/squalene synthase family. Mg(2+) serves as cofactor.

The protein resides in the endoplasmic reticulum membrane. It catalyses the reaction 2 (2E,6E)-farnesyl diphosphate + NADPH + H(+) = squalene + 2 diphosphate + NADP(+). The enzyme catalyses 2 (2E,6E)-farnesyl diphosphate + NADH + H(+) = squalene + 2 diphosphate + NAD(+). Its pathway is terpene metabolism; lanosterol biosynthesis; lanosterol from farnesyl diphosphate: step 1/3. Its function is as follows. Catalyzes the condensation of 2 two farnesyl pyrophosphate moieties to form squalene. It is the first committed enzyme of the sterol biosynthesis pathway. Required for the biosynthesis of ergosterol. This chain is Squalene synthase (ERG9), found in Eremothecium gossypii (strain ATCC 10895 / CBS 109.51 / FGSC 9923 / NRRL Y-1056) (Yeast).